Here is a 373-residue protein sequence, read N- to C-terminus: 3 beta-hydroxysteroid dehydrogenase/Delta 5--&gt;4-isomerase type 1 (373 aa).

Residues G10–L15, Y155, and K159 contribute to the NADP(+) site. K159 (proton donor) is an active-site residue. The helical transmembrane segment at L288 to I308 threads the bilayer.

It belongs to the 3-beta-HSD family. In terms of tissue distribution, placenta and skin. Predominantly expressed in mammary gland tissue.

Its subcellular location is the endoplasmic reticulum membrane. It is found in the mitochondrion membrane. The enzyme catalyses a 3beta-hydroxy-Delta(5)-steroid + NAD(+) = a 3-oxo-Delta(5)-steroid + NADH + H(+). It catalyses the reaction pregnenolone + NAD(+) = pregn-5-ene-3,20-dione + NADH + H(+). The catalysed reaction is 3beta-hydroxyandrost-5-en-17-one + NAD(+) = androst-5-ene-3,17-dione + NADH + H(+). It carries out the reaction androst-5-en-3beta,17beta-diol + NAD(+) = 17beta-hydroxy-androst-5-en-3-one + NADH + H(+). The enzyme catalyses a 3beta-hydroxysteroid + NADP(+) = a 3-oxosteroid + NADPH + H(+). It catalyses the reaction 5alpha-androstane-3beta,17beta-diol + NADP(+) = 17beta-hydroxy-5alpha-androstan-3-one + NADPH + H(+). The catalysed reaction is 3beta-hydroxy-5alpha-androstan-17-one + NADP(+) = 5alpha-androstan-3,17-dione + NADPH + H(+). It carries out the reaction a 3-oxo-Delta(5)-steroid = a 3-oxo-Delta(4)-steroid. The enzyme catalyses pregn-5-ene-3,20-dione = progesterone. It catalyses the reaction androst-5-ene-3,17-dione = androst-4-ene-3,17-dione. The catalysed reaction is 17beta-hydroxy-androst-5-en-3-one = testosterone. It carries out the reaction 5alpha-androstane-3beta,17beta-diol + NAD(+) = 17beta-hydroxy-5alpha-androstan-3-one + NADH + H(+). Its pathway is steroid hormone biosynthesis. It participates in steroid metabolism. Its function is as follows. A bifunctional enzyme responsible for the oxidation and isomerization of 3beta-hydroxy-Delta(5)-steroid precursors to 3-oxo-Delta(4)-steroids, an essential step in steroid hormone biosynthesis. Specifically catalyzes the conversion of pregnenolone to progesterone, 17alpha-hydroxypregnenolone to 17alpha-hydroxyprogesterone, dehydroepiandrosterone (DHEA) to 4-androstenedione, and androstenediol to testosterone. Additionally, catalyzes the interconversion between 3beta-hydroxy and 3-oxo-5alpha-androstane steroids controlling the bioavalability of the active forms. Specifically converts dihydrotestosterone to its inactive form 5alpha-androstanediol, that does not bind androgen receptor/AR. Also converts androstanedione, a precursor of testosterone and estrone, to epiandrosterone. Expected to use NAD(+) as preferred electron donor for the 3beta-hydroxy-steroid dehydrogenase activity and NADPH for the 3-ketosteroid reductase activity. This chain is 3 beta-hydroxysteroid dehydrogenase/Delta 5--&gt;4-isomerase type 1, found in Homo sapiens (Human).